The chain runs to 133 residues: Small ribosomal subunit protein uS8 (133 aa).

The protein belongs to the universal ribosomal protein uS8 family. As to quaternary structure, part of the 30S ribosomal subunit. Contacts proteins S5 and S12.

Functionally, one of the primary rRNA binding proteins, it binds directly to 16S rRNA central domain where it helps coordinate assembly of the platform of the 30S subunit. This chain is Small ribosomal subunit protein uS8, found in Rippkaea orientalis (strain PCC 8801 / RF-1) (Cyanothece sp. (strain PCC 8801)).